Consider the following 209-residue polypeptide: Ancillary SecYEG translocon subunit (209 aa).

The Cytoplasmic portion of the chain corresponds to 1–23; the sequence is MAAHLEEQQELDNFKYFWKTTGK. Residues 24-42 form a helical membrane-spanning segment; that stretch reads WLFALLILAALGYLGYTVY. The Periplasmic portion of the chain corresponds to 43 to 209; it reads QNRAASQNQE…LLQMKLDSLK (167 aa). The stretch at 161-194 is one TPR repeat; it reads PLLMETKGDVYAAQEKSQEALKNYGQALEKMPQD.

This sequence belongs to the YfgM family. As to quaternary structure, interacts with the SecYEG translocon. Forms a complex with PpiD.

It localises to the cell inner membrane. In terms of biological role, may mediate protein transfer from the SecYEG translocon to the periplasmic chaperone network via its periplasmic C-terminal region. In Neisseria gonorrhoeae (strain ATCC 700825 / FA 1090), this protein is Ancillary SecYEG translocon subunit.